Reading from the N-terminus, the 275-residue chain is Ribosomal RNA small subunit methyltransferase A (275 aa).

Residues asparagine 21, leucine 23, glycine 48, glutamate 69, aspartate 94, and asparagine 115 each contribute to the S-adenosyl-L-methionine site.

This sequence belongs to the class I-like SAM-binding methyltransferase superfamily. rRNA adenine N(6)-methyltransferase family. RsmA subfamily.

The protein localises to the cytoplasm. It catalyses the reaction adenosine(1518)/adenosine(1519) in 16S rRNA + 4 S-adenosyl-L-methionine = N(6)-dimethyladenosine(1518)/N(6)-dimethyladenosine(1519) in 16S rRNA + 4 S-adenosyl-L-homocysteine + 4 H(+). In terms of biological role, specifically dimethylates two adjacent adenosines (A1518 and A1519) in the loop of a conserved hairpin near the 3'-end of 16S rRNA in the 30S particle. May play a critical role in biogenesis of 30S subunits. This is Ribosomal RNA small subunit methyltransferase A from Clostridium botulinum (strain Loch Maree / Type A3).